The following is a 660-amino-acid chain: MSQLQMKLLRRKIEKRNAKLRQRNLKLQETSDTSLSQPQNGDVPKETGKGGKVKKALKRSVPVDSAEAQSGGMPEETLENGKVKKSPQKLTTLANGEAAPTPPPDSEVKKKKKKKRKMANDAGPDTKKAKTEESAEACEEPEDDVKKADDSEVPSLPLGLTGAFEDTSFASLSNLVNENTLKAIEEMGFKRMTEIQHKSIRPLLEGRDLLAAAKTGSGKTLAFLIPVIELIVKLKFMPRNGTGVLILSPTRELAMQTFGVLKELMTHHVHTYGLIMGGSNRSAEVQKLLNGINIIVATPGRLLDHMQNTPGFMYKNLQCLVIDEADRILDVGFEEELKQIIKLLPARRQTMLFSATQTRKVEDLARISLKKEPLYVGVDDDKEVATVDGLEQGYVVCPSEKRFLLLFTFLKKNRKKKVMVFFSSCMSVKYHYELLNYIDLPVLAIHGKQKQNKRTTTFFQFCNADSGILLCTDVAARGLDIPEVDWIVQYDPPDDPKEYIHRVGRTARGLNGRGHALLILRPEELGFLRYLKQSKVPLNQFDFSWSKVSDIQSQLEKLIEKNYFLHKSAQEAYKSYIRAYDSHSLKQIFNVNNLNLPQVALSFGFKVPPFVDLNVSSHDGKLKKRGGGGGFGYQKTKKVEKSKIFKHISKKPADRRQFSH.

A disordered region spans residues 16–153 (RNAKLRQRNL…DVKKADDSEV (138 aa)). Positions 25-40 (LKLQETSDTSLSQPQN) are enriched in polar residues. Residues 124–133 (PDTKKAKTEE) are compositionally biased toward basic and acidic residues. Residues 134–143 (SAEACEEPED) show a composition bias toward acidic residues. A Q motif motif is present at residues 169 to 197 (FASLSNLVNENTLKAIEEMGFKRMTEIQH). Positions 200-375 (IRPLLEGRDL…RISLKKEPLY (176 aa)) constitute a Helicase ATP-binding domain. 213–220 (AKTGSGKT) contributes to the ATP binding site. Residues 323-326 (DEAD) carry the DEAD box motif. Positions 389–559 (GLEQGYVVCP…DIQSQLEKLI (171 aa)) constitute a Helicase C-terminal domain.

It belongs to the DEAD box helicase family. DDX18/HAS1 subfamily. As to quaternary structure, interacts with NOL8; the interaction is RNA-dependent. Interacts with PRC2 complex components EZH2, SUZ2 and JARID2; these interactions prevent deposition of the repressive H3K27me3 mark onto rDNA in pluripotent cells.

The protein resides in the nucleus. The protein localises to the nucleolus. It is found in the chromosome. It catalyses the reaction ATP + H2O = ADP + phosphate + H(+). Its function is as follows. ATP-dependent RNA helicase that plays a role in the regulation of R-loop homeostasis in both endogenous R-loop-prone regions and at sites of DNA damage. At endogenous loci such as actively transcribed genes, may act as a helicase to resolve the formation of R-loop during transcription and prevent the interference of R-loop with DNA-replication machinery. Also participates in the removal of DNA-lesion-associated R-loop. Plays an essential role for establishing pluripotency during embryogenesis and for pluripotency maintenance in embryonic stem cells. Mechanistically, prevents the polycomb repressive complex 2 (PRC2) from accessing rDNA loci and protects the active chromatin status in nucleolus. The polypeptide is ATP-dependent RNA helicase DDX18 (Ddx18) (Mus musculus (Mouse)).